The primary structure comprises 116 residues: Large ribosomal subunit protein uL24 (116 aa).

This sequence belongs to the universal ribosomal protein uL24 family. Part of the 50S ribosomal subunit.

In terms of biological role, one of two assembly initiator proteins, it binds directly to the 5'-end of the 23S rRNA, where it nucleates assembly of the 50S subunit. Functionally, one of the proteins that surrounds the polypeptide exit tunnel on the outside of the subunit. This Protochlamydia amoebophila (strain UWE25) protein is Large ribosomal subunit protein uL24.